The sequence spans 1059 residues: Cellulose synthase catalytic subunit A [UDP-forming] (1059 aa).

Disordered stretches follow at residues Met-1 to Thr-159 and Met-174 to Ala-220. Residues Asn-15–Gly-36 show a composition bias toward low complexity. Polar residues-rich tracts occupy residues Gly-40 to Leu-57 and Asn-142 to Gly-154. Low complexity predominate over residues Gln-181–Gln-194. Positions Gln-204–Val-219 are enriched in basic residues. A run of 3 helical transmembrane segments spans residues Phe-246–Phe-266, Ile-280–Ala-300, and Phe-306–Ala-323. Residues Lys-328–Gln-628 form a catalytic subdomain A region. The active site involves Asp-370. Substrate contacts are provided by Asp-624 and Asp-626. Residues Gln-701 to Ala-761 are catalytic subdomain B. Asp-717 is an active-site residue. 2 helical membrane passes run Ile-790–Ile-810 and Val-813–Val-833. A disordered region spans residues Asp-933 to Lys-953. Basic and acidic residues predominate over residues Ser-939–Lys-953. The next 3 membrane-spanning stretches (helical) occupy residues Leu-963–Leu-983, Trp-993–Ile-1013, and Ile-1035–Ile-1055.

The protein belongs to the glycosyltransferase 2 family. The cofactor is Mg(2+).

Its subcellular location is the membrane. It catalyses the reaction [(1-&gt;4)-beta-D-glucosyl](n) + UDP-alpha-D-glucose = [(1-&gt;4)-beta-D-glucosyl](n+1) + UDP + H(+). The protein operates within glycan metabolism; amoeba cellulose biosynthesis. Catalytic subunit of cellulose synthase. It incorporates glucose from uridine 5'-diphosphate glucose (UDP-alpha-D-glucose) to cellulose (a (1-&gt;4)-beta-D-glucan), which is produced as an extracellular component for mechanical and chemical protection at the onset of the stalk formation, when the cells exhibit multicellular behavior during culmination. In Dictyostelium discoideum (Social amoeba), this protein is Cellulose synthase catalytic subunit A [UDP-forming] (dcsA).